The chain runs to 135 residues: NADH-quinone oxidoreductase subunit K (135 aa).

A run of 3 helical transmembrane segments spans residues V33–G53, F63–V83, and I95–L115.

This sequence belongs to the complex I subunit 4L family. In terms of assembly, NDH-1 is composed of 14 different subunits. Subunits NuoA, H, J, K, L, M, N constitute the membrane sector of the complex.

It localises to the cell inner membrane. The enzyme catalyses a quinone + NADH + 5 H(+)(in) = a quinol + NAD(+) + 4 H(+)(out). Functionally, NDH-1 shuttles electrons from NADH, via FMN and iron-sulfur (Fe-S) centers, to quinones in the respiratory chain. The immediate electron acceptor for the enzyme in this species is believed to be ubiquinone. Couples the redox reaction to proton translocation (for every two electrons transferred, four hydrogen ions are translocated across the cytoplasmic membrane), and thus conserves the redox energy in a proton gradient. In Psychrobacter arcticus (strain DSM 17307 / VKM B-2377 / 273-4), this protein is NADH-quinone oxidoreductase subunit K.